The chain runs to 436 residues: MEPYDDGFIEEQEEQEEERTEEKVINEEYKTWKKNAPFLYDMILSTALEWPTLTTQWLPDKQEVPDKPYSTHRLLLGTHTSSDAQNYLQIAHVQLPNPSAPNPDDYDEERGEIGGYGGSSKKAPMEIKFNIVQKIDHKGEVNKARYQPQNPNVIATMCTDGRVMIWDRSKHPSLPTGTVNPQMELLGHTKEGFGLSWSPHTAGHLVTGSEDKTVRLWDLTTYTKGNKALKPSRTYTHHSSIVNDVQYHPLHSSLIGTVSDDITLQILDIREAETTRAAASAEGQHRDAINAIAFNPAAETVLATGSADKSIGLWDLRNLKTKLHTLECHTDSVTSLSWHPFEESVLASASYDRKIMFWDLSRSGEEQTPDDAQDGPPELLFMHGGHTNRISDFSWNLNDPWVLCSAAEDNLLQVWKVADAIVGKDLEDVPTEELEA.

Positions 1-19 are enriched in acidic residues; it reads MEPYDDGFIEEQEEQEEER. The tract at residues 1–22 is disordered; sequence MEPYDDGFIEEQEEQEEERTEE. WD repeat units follow at residues 136–176, 187–227, 237–277, 284–324, and 328–368; these read DHKG…SLPT, GHTK…KGNK, HHSS…TTRA, QHRD…TKLH, and CHTD…EEQT. The interval 370-374 is interaction with the histone H4 N-terminus; it reads DDAQD. A WD 6 repeat occupies 385-425; it reads GHTNRISDFSWNLNDPWVLCSAAEDNLLQVWKVADAIVGKD.

Belongs to the WD repeat RBAP46/RBAP48/MSI1 family. In terms of assembly, component of the HAT-B complex composed of at least hat1 and hat2. The HAT-B complex binds to histone H4 tail.

The protein localises to the cytoplasm. It is found in the nucleus. Regulatory subunit of the histone acetylase B (HAT-B) complex. The complex acetylates 'Lys-12' of histone H4 which is required for telomeric silencing. The sequence is that of Histone acetyltransferase type B subunit 2 (hat2) from Aspergillus oryzae (strain ATCC 42149 / RIB 40) (Yellow koji mold).